The sequence spans 534 residues: MNPILVLLCVIALGLLVGRVSFRGISLGTSAILFVALLAGHYGWTIPTGFGTLGLALFVYCVGISAGPTFFRGLASHGRAMAITGSVIVLTGVAVTWTSARLLGLPAELAGGLMAGAMTSTPALGAITQSSSDPAAVAVGFGVAYPIGIIAVVLFVQIAIKLFAKPGDSDGTDSASETSGQSSAEIAESNSIGRRVVRIANPVVSGKRPSDIVAFADSPCQMSRVQREGRWRPTPPDYQFEIGDDVMLVGGASEIRRVSETLGELQDTAEPVVDADRERRYVVVTSPEIYGRTLKELRLRSKYGVTIVRVQRHDVEFVPSARTRIEFGDGLVAVGEPDALAKIANAVGHRPRTVNETDLLSLVAGIVLGIFVGNLSLQIGEFSMSLGIAGGPLMVGLILGHFRRLGPIRGSYPPAAMLLMTEGGLALFLADAGLNAGANVVEVLMERGAMLCVAAAAIAIIPLLVGFAGSRYFGGRTLWQSLGATCGGMTSTPGLAVLTGATDSSQPATSYVAAYPVALVLITVAAPWLVELIG.

5 helical membrane-spanning segments follow: residues 4–22, 24–46, 56–75, 82–104, and 134–156; these read ILVL…RVSF, GISL…GWTI, ALFV…RGLA, AITG…RLLG, and PAAV…VLFV. A disordered region spans residues 167–187; the sequence is GDSDGTDSASETSGQSSAEIA. Polar residues predominate over residues 172–187; it reads TDSASETSGQSSAEIA. 2 RCK C-terminal domains span residues 180-264 and 265-349; these read GQSS…TLGE and LQDT…AVGH. 6 helical membrane passes run 359-378, 382-401, 408-430, 445-467, 479-501, and 511-533; these read LLSL…LSLQ, FSMS…ILGH, IRGS…LFLA, MERG…LVGF, WQSL…LTGA, and YVAA…VELI.

Belongs to the AAE transporter (TC 2.A.81) family.

The protein resides in the cell membrane. This is an uncharacterized protein from Rhodopirellula baltica (strain DSM 10527 / NCIMB 13988 / SH1).